We begin with the raw amino-acid sequence, 310 residues long: Pyrimidine-specific ribonucleoside hydrolase RihA (310 aa).

His-240 is a catalytic residue.

Belongs to the IUNH family. RihA subfamily.

In terms of biological role, hydrolyzes cytidine or uridine to ribose and cytosine or uracil, respectively. The polypeptide is Pyrimidine-specific ribonucleoside hydrolase RihA (Photobacterium profundum (strain SS9)).